The following is a 1014-amino-acid chain: Probable transport protein MmpL11 (1014 aa).

The next 12 membrane-spanning stretches (helical) occupy residues 13–33 (WLVF…AMTQ), 156–173 (VRLY…VAAN), 188–208 (IILI…VPLA), 235–255 (TSTV…FILM), 279–299 (GLAV…IYLI), 311–331 (AILA…AALA), 373–393 (ASAA…MMLG), 530–550 (TEPL…LISI), 560–580 (VLMT…VFQW), 598–618 (VPPL…IFLL), 649–669 (AALI…PLVA), and 671–691 (IGVA…LVLV). Positions 783–802 (SDRVLPGAATQESEEDPAMG) are disordered.

This sequence belongs to the resistance-nodulation-cell division (RND) (TC 2.A.6) family. MmpL subfamily.

It is found in the cell membrane. The sequence is that of Probable transport protein MmpL11 (mmpL11) from Mycobacterium leprae (strain TN).